Reading from the N-terminus, the 366-residue chain is tRNA/tmRNA (uracil-C(5))-methyltransferase (366 aa).

Gln-190, Tyr-218, Asn-223, Glu-239, and Asp-299 together coordinate S-adenosyl-L-methionine. The active-site Nucleophile is Cys-324. Catalysis depends on Glu-358, which acts as the Proton acceptor.

It belongs to the class I-like SAM-binding methyltransferase superfamily. RNA M5U methyltransferase family. TrmA subfamily.

The catalysed reaction is uridine(54) in tRNA + S-adenosyl-L-methionine = 5-methyluridine(54) in tRNA + S-adenosyl-L-homocysteine + H(+). It carries out the reaction uridine(341) in tmRNA + S-adenosyl-L-methionine = 5-methyluridine(341) in tmRNA + S-adenosyl-L-homocysteine + H(+). Its function is as follows. Dual-specificity methyltransferase that catalyzes the formation of 5-methyluridine at position 54 (m5U54) in all tRNAs, and that of position 341 (m5U341) in tmRNA (transfer-mRNA). This Edwardsiella ictaluri (strain 93-146) protein is tRNA/tmRNA (uracil-C(5))-methyltransferase.